A 274-amino-acid polypeptide reads, in one-letter code: 2,3,4,5-tetrahydropyridine-2,6-dicarboxylate N-succinyltransferase (274 aa).

The protein belongs to the transferase hexapeptide repeat family.

It is found in the cytoplasm. It carries out the reaction (S)-2,3,4,5-tetrahydrodipicolinate + succinyl-CoA + H2O = (S)-2-succinylamino-6-oxoheptanedioate + CoA. It functions in the pathway amino-acid biosynthesis; L-lysine biosynthesis via DAP pathway; LL-2,6-diaminopimelate from (S)-tetrahydrodipicolinate (succinylase route): step 1/3. The sequence is that of 2,3,4,5-tetrahydropyridine-2,6-dicarboxylate N-succinyltransferase from Yersinia pseudotuberculosis serotype IB (strain PB1/+).